The primary structure comprises 201 residues: MTLYQIKPLFQSLLRPTMFWLYKHHVTANHITLAALALSLLTGLLLMLAAQPILFLLLPIVLFIRMALNALDGMLARECNQQTRLGAILNETGDVISDIALYLPFLFLPESNASLVILMLFCTILTEFCGLLAQTINGVRSYAGPFGKSDRALIFGLWGLAVAIYPQWMQWNNLLWSIASILLLWTAINRCRSVLLMSAEI.

Residues M1–G43 are Periplasmic-facing. The helical transmembrane segment at L44–I64 threads the bilayer. Topologically, residues R65 to R84 are cytoplasmic. A helical transmembrane segment spans residues L85–F107. Topologically, residues L108–V116 are periplasmic. Residues I117 to V139 form a helical membrane-spanning segment. Topologically, residues R140–R151 are cytoplasmic. A helical transmembrane segment spans residues A152–N172. Residues N173–L175 are Periplasmic-facing. A helical membrane pass occupies residues W176 to L196. The Cytoplasmic portion of the chain corresponds to M197–I201.

It localises to the cell inner membrane. This Escherichia coli (strain K12) protein is Inner membrane protein YnbA (ynbA).